A 131-amino-acid polypeptide reads, in one-letter code: Cystatin J (131 aa).

Residues 1 to 18 form the signal peptide; sequence MHLYLCVLVCLSIGMANC. Positions 35–109 constitute a Cystatin domain; sequence DEILLTGVEF…RMNLPTKCSF (75 aa). Residues 68-72 carry the Secondary area of contact motif; it reads QVVAG. Disulfide bonds link Cys-86–Cys-97 and Cys-107–Cys-128.

This sequence belongs to the cystatin family.

It is found in the secreted. The protein localises to the nematocyst. This recombinant protein inhibits the C1 cysteine protease papain (Ki is below 0.5 nM). The polypeptide is Cystatin J (Cyanea capillata (Lion's mane jellyfish)).